A 221-amino-acid polypeptide reads, in one-letter code: Large ribosomal subunit protein uL3 (221 aa).

The protein belongs to the universal ribosomal protein uL3 family. Part of the 50S ribosomal subunit. Forms a cluster with proteins L14 and L19.

One of the primary rRNA binding proteins, it binds directly near the 3'-end of the 23S rRNA, where it nucleates assembly of the 50S subunit. The protein is Large ribosomal subunit protein uL3 of Chlamydia trachomatis serovar L2 (strain ATCC VR-902B / DSM 19102 / 434/Bu).